Reading from the N-terminus, the 207-residue chain is dITP/XTP pyrophosphatase (207 aa).

11–16 (TGNPGK) lines the substrate pocket. Catalysis depends on Asp72, which acts as the Proton acceptor. Residue Asp72 coordinates Mg(2+). Residues Ser73, 154–157 (FGYD), Lys177, and 182–183 (HR) contribute to the substrate site.

The protein belongs to the HAM1 NTPase family. Homodimer. The cofactor is Mg(2+).

The enzyme catalyses XTP + H2O = XMP + diphosphate + H(+). The catalysed reaction is dITP + H2O = dIMP + diphosphate + H(+). It catalyses the reaction ITP + H2O = IMP + diphosphate + H(+). In terms of biological role, pyrophosphatase that catalyzes the hydrolysis of nucleoside triphosphates to their monophosphate derivatives, with a high preference for the non-canonical purine nucleotides XTP (xanthosine triphosphate), dITP (deoxyinosine triphosphate) and ITP. Seems to function as a house-cleaning enzyme that removes non-canonical purine nucleotides from the nucleotide pool, thus preventing their incorporation into DNA/RNA and avoiding chromosomal lesions. In Thermus thermophilus (strain ATCC BAA-163 / DSM 7039 / HB27), this protein is dITP/XTP pyrophosphatase.